We begin with the raw amino-acid sequence, 238 residues long: Probable 2-phosphosulfolactate phosphatase (238 aa).

This sequence belongs to the ComB family. It depends on Mg(2+) as a cofactor.

It catalyses the reaction (2R)-O-phospho-3-sulfolactate + H2O = (2R)-3-sulfolactate + phosphate. In Clostridium beijerinckii (strain ATCC 51743 / NCIMB 8052) (Clostridium acetobutylicum), this protein is Probable 2-phosphosulfolactate phosphatase.